The primary structure comprises 637 residues: Glutamate--cysteine ligase catalytic subunit (637 aa).

Met-1 carries the N-acetylmethionine modification. 2 positions are modified to phosphoserine: Ser-5 and Ser-8.

Belongs to the glutamate--cysteine ligase type 3 family. Heterodimer of a catalytic heavy chain and a regulatory light chain.

It carries out the reaction L-cysteine + L-glutamate + ATP = gamma-L-glutamyl-L-cysteine + ADP + phosphate + H(+). The enzyme catalyses (2S)-2-aminobutanoate + L-glutamate + ATP = gamma-L-glutamyl-(2S)-2-aminobutanoate + ADP + phosphate + H(+). It functions in the pathway sulfur metabolism; glutathione biosynthesis; glutathione from L-cysteine and L-glutamate: step 1/2. With respect to regulation, feedback inhibition by glutathione. Functionally, catalyzes the ATP-dependent ligation of L-glutamate and L-cysteine and participates in the first and rate-limiting step in glutathione biosynthesis. The chain is Glutamate--cysteine ligase catalytic subunit from Mus musculus (Mouse).